Consider the following 150-residue polypeptide: SKP1-like protein 17 (150 aa).

The interval 92–150 (LDAADYLIVIGLKNLIAQAIADYTADKTVNEIRELFNIENDYTPEEEEELRKKNEWAFN) is interaction with the F-box domain of F-box proteins.

The protein belongs to the SKP1 family. Part of a SCF (SKP1-cullin-F-box) protein ligase complex. Interacts with CPR1/CPR30. In terms of tissue distribution, mainly detected in the siliques.

The protein resides in the nucleus. It functions in the pathway protein modification; protein ubiquitination. Involved in ubiquitination and subsequent proteasomal degradation of target proteins. Together with CUL1, RBX1 and a F-box protein, it forms a SCF E3 ubiquitin ligase complex. The functional specificity of this complex depends on the type of F-box protein. In the SCF complex, it serves as an adapter that links the F-box protein to CUL1. Probably implicated in incompatibility response after hybridization. This is SKP1-like protein 17 (ASK17) from Arabidopsis thaliana (Mouse-ear cress).